The following is a 903-amino-acid chain: Glutamate receptor ionotropic, NMDA 1 (903 aa).

An N-terminal signal peptide occupies residues 1 to 20 (MGTMRLFLLAVLFLFSFARA). Residues 21–557 (GCDPKIVNIG…TLDSFMQPFQ (537 aa)) lie on the Extracellular side of the membrane. N-linked (GlcNAc...) asparagine glycosylation is found at Asn-61, Asn-203, Asn-276, Asn-300, Asn-350, Asn-368, Asn-440, Asn-469, and Asn-489. An intrachain disulfide couples Cys-79 to Cys-308. 2 disulfide bridges follow: Cys-420–Cys-452 and Cys-436–Cys-453. Glycine is bound by residues Pro-514, Thr-516, and Arg-521. Residues 558 to 578 (STLWLLVGLSVHVVAVMLYLL) form a helical membrane-spanning segment. Over 579–600 (DRFSPFGRFKVNSEEEEEDALT) the chain is Cytoplasmic. The segment at 601–620 (LSSAMWFSWGVLLNSGIGEG) is pore-forming. The discontinuously helical intramembrane region spans 601–622 (LSSAMWFSWGVLLNSGIGEGAP). Residues 623-628 (RSFSAR) are Cytoplasmic-facing. Residues 629–645 (ILGMVWAGFAMIIVASY) form a helical membrane-spanning segment. Residues 646–810 (TANLAAFLVL…NAPATLTFEN (165 aa)) lie on the Extracellular side of the membrane. Glycine-binding residues include Ser-686 and Asp-730. Cys-742 and Cys-796 are joined by a disulfide. A glycan (N-linked (GlcNAc...) asparagine) is linked at Asn-769. Residues 811–831 (MAGVFMLVAGGIVAGIFLIFI) traverse the membrane as a helical segment. Residues 832-903 (EIAYKRHKDA…SSKDTVNVVV (72 aa)) lie on the Cytoplasmic side of the membrane.

The protein belongs to the glutamate-gated ion channel (TC 1.A.10.1) family. NR1/GRIN1 subfamily. In terms of assembly, heterotetramer; the NMDAR subunits are modular and harbor tiered domains that function in concert to regulate opening and closing of the cation-selective ion channel pore. Forms heterotetrameric channels composed of two GluN1/zeta subunits (GRIN1), and two identical GluN2/epsilon subunits (GRIN2A, GRIN2B, GRIN2C or GRIN2D) or GluN3 subunits (GRIN3A or GRIN3B) (in vitro). Does not form functional channels by itself. Can also form heterotetrameric channels that contain at least two GluN1 subunits and at least two different GluN2 subunits (or a combination of one GluN2 and one GluN3 subunits) (in vitro). In vivo, the subunit composition may vary in function of the expression levels of the different subunits.

It is found in the cell membrane. The protein resides in the postsynaptic cell membrane. It localises to the postsynaptic density membrane. Its subcellular location is the synaptic cell membrane. It catalyses the reaction Ca(2+)(in) = Ca(2+)(out). The catalysed reaction is Na(+)(in) = Na(+)(out). It carries out the reaction K(+)(in) = K(+)(out). Its activity is regulated as follows. NMDA glutamate receptor activity is modulated by zinc ions. The NMDA glutamate receptor activity of the heterotetramer with grin2b is stimulated by micromolar levels of Zn(2+). The NMDA glutamate receptor activity of the heterotetramer with grin2a is inhibited by nanomolar levels of Zn(2+). Its function is as follows. Component of N-methyl-D-aspartate (NMDA) receptors (NMDARs) that function as heterotetrameric, ligand-gated cation channels with high calcium permeability and voltage-dependent block by Mg(2+). NMDARs participate in synaptic plasticity. Channel activation requires binding of the neurotransmitter L-glutamate to the GluN2 subunit, glycine binding to the GluN1 subunit, plus membrane depolarization to eliminate channel inhibition by Mg(2+). NMDARs mediate simultaneously the potasium efflux and the influx of calcium and sodium. Each GluN2 or GluN3 subunit confers differential attributes to channel properties, including activation, deactivation and desensitization kinetics, pH sensitivity, Ca2(+) permeability, and binding to allosteric modulators. This is Glutamate receptor ionotropic, NMDA 1 from Xenopus laevis (African clawed frog).